A 509-amino-acid polypeptide reads, in one-letter code: ATP synthase subunit alpha (509 aa).

An ATP-binding site is contributed by 169-176 (GDRQTGKT).

This sequence belongs to the ATPase alpha/beta chains family. In terms of assembly, F-type ATPases have 2 components, CF(1) - the catalytic core - and CF(0) - the membrane proton channel. CF(1) has five subunits: alpha(3), beta(3), gamma(1), delta(1), epsilon(1). CF(0) has three main subunits: a(1), b(2) and c(9-12). The alpha and beta chains form an alternating ring which encloses part of the gamma chain. CF(1) is attached to CF(0) by a central stalk formed by the gamma and epsilon chains, while a peripheral stalk is formed by the delta and b chains.

Its subcellular location is the cell inner membrane. It carries out the reaction ATP + H2O + 4 H(+)(in) = ADP + phosphate + 5 H(+)(out). Its function is as follows. Produces ATP from ADP in the presence of a proton gradient across the membrane. The alpha chain is a regulatory subunit. This chain is ATP synthase subunit alpha, found in Zymomonas mobilis subsp. mobilis (strain ATCC 31821 / ZM4 / CP4).